The following is a 687-amino-acid chain: A-kinase anchor protein 8 (687 aa).

The tract at residues 1 to 195 is interaction with MCM2; that stretch reads MEQGYGGYGA…FLRGRGQGRF (195 aa). The segment at 1 to 210 is interaction with DPY30; sequence MEQGYGGYGA…SSTFIRSDPF (210 aa). Position 72 is a phosphoserine (S72). Disordered stretches follow at residues 105 to 124 and 185 to 218; these read KEGGRGGISSGGEGVQDRDS and GFLRGRGQGRFQDRSNSSTFIRSDPFMPPSASEP. Position 109 is an asymmetric dimethylarginine; alternate (R109). R109 carries the omega-N-methylarginine; alternate modification. Gly residues predominate over residues 109-118; the sequence is RGGISSGGEG. The interaction with DDX5 stretch occupies residues 109 to 201; it reads RGGISSGGEG…QGRFQDRSNS (93 aa). S199 is subject to Phosphoserine. R232 and R276 each carry omega-N-methylarginine. Positions 277–379 are disordered; that stretch reads SQTRIRDWPR…KQRRRDRMRD (103 aa). Basic and acidic residues-rich tracts occupy residues 280–294 and 311–320; these read RIRDWPRRRGFERFG and PDAKLARADS. The Bipartite nuclear localization signal motif lies at 286 to 303; it reads RRRGFERFGPDNMGRKRK. Residue K314 forms a Glycyl lysine isopeptide (Lys-Gly) (interchain with G-Cter in SUMO2) linkage. Phosphoserine occurs at positions 320, 325, and 336. Residues 321–331 are compositionally biased toward acidic residues; it reads DGDLSENDDGA. The segment covering 335-357 has biased composition (basic and acidic residues); that stretch reads RSGDEEFRGEDDLCDSRKQRGEK. The tract at residues 384–447 is involved in chromatin-binding; that stretch reads RIQFACSVCK…NKKIEKRRQE (64 aa). 2 C2H2 AKAP95-type zinc fingers span residues 389–411 and 478–501; these read CSVCKFRSFEDEEIQKHLQSKFH and CLACDMLIPAQHQLLQRHLHSVDH. The tract at residues 522-565 is involved in condensin complex recruitment; sequence SVLNNKHIVKMLEKYLKGEDPFVNETADLETEGDENVGEEKEET. T552 bears the Phosphothreonine mark. The interval 568–585 is RII-binding; the sequence is EVAAEVLAEVITAAVKAV. The tract at residues 572-589 is required for interaction with MYCBP; the sequence is EVLAEVITAAVKAVEGEG. The segment at 624 to 659 is disordered; the sequence is QTCEAASETRSIEDKTRGEAAEARNEAAMPTADAGS. The segment covering 633-648 has biased composition (basic and acidic residues); it reads RSIEDKTRGEAAEARN. S659 bears the Phosphoserine mark.

Belongs to the AKAP95 family. Binds to the PKA RII-alpha regulatory subunit PRKAR2A. Interacts (via C-terminus) with FIGN. Interacts with NCAPD2, CCND3, CCNE1, MCM2, RPS6KA1, DDX5, PDE4A. Interacts with MYCBP; MYCBP is translocated to the nucleus and the interaction prevents the association of the PKA catalytic subunit leading to suppression of PKA activity. Interacts with CCND1, CASP3. Interacts with NFKB1; detetcted in the cytoplasm. Interacts with DPY30; mediating AKAP8 association with at least the MLL4/WBP7 HMT complex. Interacts with HDAC3; increased during mitosis. Interacts with GJA1; in the nucleus and in the nuclear membrane; the nuclear association increases with progress of cell cycle G1, S and G2 phase and decreases in M phase. Phosphorylated on tyrosine residues probably by SRC subfamily protein kinases; multiple phosphorylation is leading to dissociation from nuclear structures implicated in chromatin structural changes.

It localises to the nucleus matrix. Its subcellular location is the nucleus. It is found in the nucleolus. The protein resides in the cytoplasm. Its function is as follows. Anchoring protein that mediates the subcellular compartmentation of cAMP-dependent protein kinase (PKA type II). Acts as an anchor for a PKA-signaling complex onto mitotic chromosomes, which is required for maintenance of chromosomes in a condensed form throughout mitosis. Recruits condensin complex subunit NCAPD2 to chromosomes required for chromatin condensation; the function appears to be independent from PKA-anchoring. Specifically involved in recruitment of CAPD2 to, and condensation of maternal but not paternal chromosomes. May help to deliver cyclin D/E to CDK4 to facilitate cell cycle progression. Required for cell cycle G2/M transition and histone deacetylation during mitosis. In mitotic cells recruits HDAC3 to the vicinity of chromatin leading to deacetylation and subsequent phosphorylation at 'Ser-10' of histone H3; in this function may act redundantly with AKAP8L. Involved in nuclear retention of RPS6KA1 upon ERK activation thus inducing cell proliferation. May be involved in regulation of DNA replication by acting as scaffold for MCM2. Enhances HMT activity of the KMT2 family MLL4/WBP7 complex and is involved in transcriptional regulation. In a teratocarcinoma cell line is involved in retinoic acid-mediated induction of developmental genes implicating H3 'Lys-4' methylation. May be involved in recruitment of active CASP3 to the nucleus in apoptotic cells. May act as a carrier protein of GJA1 for its transport to the nucleus. May play a repressive role in the regulation of rDNA transcription. Preferentially binds GC-rich DNA in vitro. In cells, associates with ribosomal RNA (rRNA) chromatin, preferentially with rRNA promoter and transcribed regions. Involved in modulation of Toll-like receptor signaling. Required for the cAMP-dependent suppression of TNF-alpha in early stages of LPS-induced macrophage activation; the function probably implicates targeting of PKA to NFKB1. This Mus musculus (Mouse) protein is A-kinase anchor protein 8 (Akap8).